A 158-amino-acid polypeptide reads, in one-letter code: Protein Smg homolog (158 aa).

Belongs to the Smg family.

In Shewanella oneidensis (strain ATCC 700550 / JCM 31522 / CIP 106686 / LMG 19005 / NCIMB 14063 / MR-1), this protein is Protein Smg homolog.